Here is a 579-residue protein sequence, read N- to C-terminus: uncharacterized protein (579 aa).

11 helical membrane passes run 13 to 35 (DLIKQYPLAMSFIFISTAFIPWI), 39 to 61 (SISRDMIVVLLLPIYFSTVLLLN), 66 to 83 (ANGLAIAYAILITLAFYF), 93 to 110 (AYWGLLLIHFVLFVTYPL), 130 to 152 (LAIVLAGIICICAVLVLNSIEYL), 162 to 181 (IVPKTLLFIMCFFTPVFFLI), 201 to 223 (LIVNFIFSPVVILYTLIVYLYLA), 238 to 257 (YIIMPYIALGLCCQGLRLLL), 264 to 286 (GFYRVFAYLSIAPLVLLWVGIHT), 296 to 315 (IRVMLVVLASMMTLFILFSM), and 324 to 346 (LFSLTACLLLFISTILTSPYYLA).

It is found in the cell membrane. This is an uncharacterized protein from Pasteurella multocida (strain Pm70).